The following is a 92-amino-acid chain: Acylphosphatase (92 aa).

An intrachain disulfide couples Cys5 to Cys49. In terms of domain architecture, Acylphosphatase-like spans 5 to 92 (CIIAWVYGRV…SGELTDFRIR (88 aa)). Residues Arg20 and Asn38 contribute to the active site.

The protein belongs to the acylphosphatase family.

It carries out the reaction an acyl phosphate + H2O = a carboxylate + phosphate + H(+). In Escherichia coli O6:H1 (strain CFT073 / ATCC 700928 / UPEC), this protein is Acylphosphatase.